The chain runs to 89 residues: Prostaglandin E2 receptor EP3 subtype (89 aa).

A helical membrane pass occupies residues glycine 1–glycine 18. Over glutamine 19–asparagine 48 the chain is Extracellular. Residue asparagine 38 is glycosylated (N-linked (GlcNAc...) asparagine). Residues valine 49–isoleucine 74 form a helical membrane-spanning segment. The Cytoplasmic portion of the chain corresponds to lysine 75–glutamine 89.

The protein belongs to the G-protein coupled receptor 1 family. Interacts (via C-terminus) with MKLN1.

The protein localises to the cell membrane. Its function is as follows. Receptor for prostaglandin E2 (PGE2). Required for normal development of fever in response to pyrinogens, including IL1B, prostaglandin E2 and bacterial lipopolysaccharide (LPS). Required for normal potentiation of platelet aggregation by prostaglandin E2, and thus plays a role in the regulation of blood coagulation. Required for increased HCO3(-) secretion in the duodenum in response to mucosal acidification, and thereby contributes to the protection of the mucosa against acid-induced ulceration. Not required for normal kidney function, normal urine volume and osmolality. The chain is Prostaglandin E2 receptor EP3 subtype (PTGER3) from Ovis aries (Sheep).